A 527-amino-acid chain; its full sequence is Arginine--tRNA ligase (527 aa).

A 'HIGH' region motif is present at residues 108-118 (ANPTGPLHIGH).

The protein belongs to the class-I aminoacyl-tRNA synthetase family. As to quaternary structure, monomer.

It is found in the cytoplasm. The enzyme catalyses tRNA(Arg) + L-arginine + ATP = L-arginyl-tRNA(Arg) + AMP + diphosphate. This is Arginine--tRNA ligase from Sulfurimonas denitrificans (strain ATCC 33889 / DSM 1251) (Thiomicrospira denitrificans (strain ATCC 33889 / DSM 1251)).